The sequence spans 863 residues: Importin subunit beta-1 (863 aa).

HEAT repeat units follow at residues 2–31 (NAGE…AART), 33–62 (FAQY…LALK), 85–124 (VEIK…ELAT), 129–159 (DLMV…YICE), 170–201 (SNAI…LYDS), 212–248 (EYER…MHLY), 253–299 (PFYM…EIQE), 314–360 (FARA…QVVG), 364–392 (VNPV…AFGS), 399–439 (VAML…SSFV), 449–481 (LSPM…VCHF), 496–530 (YEAI…LITF), 536–586 (LPMI…IIRR), 592–630 (RTSS…MNSL), 635–671 (EVYV…LARA), 677–715 (LPYC…ALAI), 720–767 (QTYL…ITQA), 778–815 (QPYV…LAES), and 822–861 (KSYF…KRQA). The region spanning 21–101 (AEKQLENAAR…KSLALQTLGS (81 aa)) is the Importin N-terminal domain.

Belongs to the importin beta family. Importin beta-1 subfamily. As to quaternary structure, forms a complex with an importin alpha subunit. Interacts with Ran; interacts specifically with the GTP-bound form of Ran (GTP-Ran), protecting it from GTP hydrolysis and nucleotide exchange. Interacts with nucleoporins.

It localises to the cytoplasm. The protein localises to the nucleus envelope. Its subcellular location is the nucleus. It is found in the nuclear pore complex. Functionally, importin beta subunit that functions in nuclear protein import through association with the importin alpha subunit, which binds to the clasical nuclear localization signal (cNLS) in cargo substrates. Docking of the importin/substrate complex to the nuclear pore complex (NPC) is mediated by importin beta through binding to nucleoporin FxFG repeats and the complex is subsequently translocated through the pore by an energy requiring, Ran-dependent mechanism. At the nucleoplasmic side of the NPC, GTP-Ran binds to importin beta and the three components separate, leading to release of the cargo. Importin alpha and beta are re-exported from the nucleus to the cytoplasm where GTP hydrolysis releases Ran from importin beta. The directionality of nuclear import is thought to be conferred by an asymmetric distribution of the GTP- and GDP-bound forms of Ran between the cytoplasm and nucleus. In Schizosaccharomyces pombe (strain 972 / ATCC 24843) (Fission yeast), this protein is Importin subunit beta-1.